The sequence spans 335 residues: N-acetylglucosaminyl-phosphatidylinositol de-N-acetylase (335 aa).

Residues S3–L23 traverse the membrane as a helical segment. Residues N128 and N153 are each glycosylated (N-linked (GlcNAc...) asparagine).

The protein belongs to the PIGL family.

It localises to the endoplasmic reticulum membrane. It carries out the reaction a 6-(N-acetyl-alpha-D-glucosaminyl)-1-(1,2-diacyl-sn-glycero-3-phospho)-1D-myo-inositol + H2O = a 6-(alpha-D-glucosaminyl)-1-(1,2-diacyl-sn-glycero-3-phospho)-1D-myo-inositol + acetate. It participates in glycolipid biosynthesis; glycosylphosphatidylinositol-anchor biosynthesis. Its function is as follows. Involved in the second step of GPI biosynthesis. De-N-acetylation of N-acetylglucosaminyl-phosphatidylinositol. The polypeptide is N-acetylglucosaminyl-phosphatidylinositol de-N-acetylase (Arthroderma benhamiae (strain ATCC MYA-4681 / CBS 112371) (Trichophyton mentagrophytes)).